The sequence spans 207 residues: Ribosomal RNA small subunit methyltransferase G (207 aa).

S-adenosyl-L-methionine-binding positions include G73, L78, 124–125, and R139; that span reads VE.

Belongs to the methyltransferase superfamily. RNA methyltransferase RsmG family.

It is found in the cytoplasm. It carries out the reaction guanosine(527) in 16S rRNA + S-adenosyl-L-methionine = N(7)-methylguanosine(527) in 16S rRNA + S-adenosyl-L-homocysteine. Specifically methylates the N7 position of guanine in position 527 of 16S rRNA. In Escherichia coli O17:K52:H18 (strain UMN026 / ExPEC), this protein is Ribosomal RNA small subunit methyltransferase G.